Reading from the N-terminus, the 692-residue chain is Elongation factor G (692 aa).

The tr-type G domain occupies 8–282 (EKTRNIGIMA…GVVDYLPSPV (275 aa)). GTP contacts are provided by residues 17-24 (AHIDAGKT), 81-85 (DTPGH), and 135-138 (NKMD).

It belongs to the TRAFAC class translation factor GTPase superfamily. Classic translation factor GTPase family. EF-G/EF-2 subfamily.

It is found in the cytoplasm. Catalyzes the GTP-dependent ribosomal translocation step during translation elongation. During this step, the ribosome changes from the pre-translocational (PRE) to the post-translocational (POST) state as the newly formed A-site-bound peptidyl-tRNA and P-site-bound deacylated tRNA move to the P and E sites, respectively. Catalyzes the coordinated movement of the two tRNA molecules, the mRNA and conformational changes in the ribosome. This Geobacillus kaustophilus (strain HTA426) protein is Elongation factor G.